The following is a 70-amino-acid chain: U2-agatoxin-Ao1a (70 aa).

The N-terminal stretch at 1–20 (MRAIISLFLISAMVFSMIQA) is a signal peptide. A propeptide spanning residues 21–34 (VPEEEGLQLSEDER) is cleaved from the precursor. Intrachain disulfides connect C37/C53, C44/C58, and C52/C68. A Leucine amide modification is found at L69.

Belongs to the neurotoxin 01 (U2-agtx) family. As to expression, expressed by the venom gland.

Its subcellular location is the secreted. In terms of biological role, insect active toxin causing rapid but reversible paralysis in crickets. No activity shown in mammals. Suppresses the excitatory postsynaptic potentials evoked in lobster neuromuscular synaptic preparations, possibly by blocking the presynaptic calcium channel. Induces instantaneous reversible paralysis when injected into crickets. Does not show effect on mammalian Cav2.1/CACNA1A, Cav2.2/CACNA1B and Cav2.3/CACNA1E. This chain is U2-agatoxin-Ao1a, found in Agelena orientalis (Funnel-web spider).